The sequence spans 441 residues: 3-phosphoshikimate 1-carboxyvinyltransferase (441 aa).

Lysine 22, serine 23, and arginine 27 together coordinate 3-phosphoshikimate. Lysine 22 contacts phosphoenolpyruvate. The phosphoenolpyruvate site is built by glycine 95 and arginine 123. 3-phosphoshikimate contacts are provided by serine 168, glutamine 170, aspartate 321, and lysine 348. Glutamine 170 contributes to the phosphoenolpyruvate binding site. The active-site Proton acceptor is the aspartate 321. The phosphoenolpyruvate site is built by arginine 352 and arginine 400.

Belongs to the EPSP synthase family. As to quaternary structure, monomer.

Its subcellular location is the cytoplasm. It carries out the reaction 3-phosphoshikimate + phosphoenolpyruvate = 5-O-(1-carboxyvinyl)-3-phosphoshikimate + phosphate. It functions in the pathway metabolic intermediate biosynthesis; chorismate biosynthesis; chorismate from D-erythrose 4-phosphate and phosphoenolpyruvate: step 6/7. Catalyzes the transfer of the enolpyruvyl moiety of phosphoenolpyruvate (PEP) to the 5-hydroxyl of shikimate-3-phosphate (S3P) to produce enolpyruvyl shikimate-3-phosphate and inorganic phosphate. The polypeptide is 3-phosphoshikimate 1-carboxyvinyltransferase (Novosphingobium aromaticivorans (strain ATCC 700278 / DSM 12444 / CCUG 56034 / CIP 105152 / NBRC 16084 / F199)).